The following is a 223-amino-acid chain: ATP phosphoribosyltransferase (223 aa).

It belongs to the ATP phosphoribosyltransferase family. Short subfamily. As to quaternary structure, heteromultimer composed of HisG and HisZ subunits.

It localises to the cytoplasm. It catalyses the reaction 1-(5-phospho-beta-D-ribosyl)-ATP + diphosphate = 5-phospho-alpha-D-ribose 1-diphosphate + ATP. Its pathway is amino-acid biosynthesis; L-histidine biosynthesis; L-histidine from 5-phospho-alpha-D-ribose 1-diphosphate: step 1/9. Its function is as follows. Catalyzes the condensation of ATP and 5-phosphoribose 1-diphosphate to form N'-(5'-phosphoribosyl)-ATP (PR-ATP). Has a crucial role in the pathway because the rate of histidine biosynthesis seems to be controlled primarily by regulation of HisG enzymatic activity. The polypeptide is ATP phosphoribosyltransferase (Novosphingobium aromaticivorans (strain ATCC 700278 / DSM 12444 / CCUG 56034 / CIP 105152 / NBRC 16084 / F199)).